The sequence spans 641 residues: MDQTYLDQQQLDANVNHQQLSQDTNSIPQQQLQQQQQPLQQLQQYQQQPLSNANFSGDNRFQQYQPRVTPSVSSSQQSIHNTTGYVTMHSGNYTPNQQYGVPNQYTVLQQQPPRQQSYEENINPLSYNSNYRTLSAPIPPLHIQHQLASKQNQDQNQSQNRYEQSSMTSIHTNDNSSSVNNSPNTMMIKQEHSTFQPQHSNEGSSAYHPVDQQNHQQQQQPQQQQQPQQQQQPQQQQQPQQPMTRSICTRCKKGFDQPIIYPKSSNSTNGNNSNGQNSSSIPPPEPRTFKLCDHCRKLQRQRSRRWQKKTKDREGVCRRCGSEIPLAERRFVLCPSCRENLRLRKASRAAQGRCVHCSGPLDASILSKENEGNNNGDEQNNKSNEDQNNESRRGSQEKPARGASHKVCQRCRENDKIRRANLEKMGNCNRCAKALDPNEYGRNKVCFNCRTKKKRSPPENVTNTDEVRTSPIQNQYGMNMSHQYIQPPPPPPPPLMTGHHQFQPQPHMMGHEQMNTFTTMSNSGVAGIQQPNNGMVVGDQQQQQQQHNGSMQLQPTYYQSYVQMPPPLQLQQQQQQQQQHYSLDGIPQQPHSAPTSSFPPPPPPPLQLNQHQGLQQYSHAQQQQQQQHQQQQPYHQEYPNN.

A compositionally biased stretch (polar residues) spans 13–27 (ANVNHQQLSQDTNSI). 3 disordered regions span residues 13–38 (ANVN…QQQP), 146–245 (QLAS…PMTR), and 258–287 (PIIY…PEPR). Composition is skewed to low complexity over residues 28–38 (PQQQLQQQQQP) and 151–160 (QNQDQNQSQN). The segment covering 161–172 (RYEQSSMTSIHT) has biased composition (polar residues). The span at 173–184 (NDNSSSVNNSPN) shows a compositional bias: low complexity. The segment covering 193-204 (STFQPQHSNEGS) has biased composition (polar residues). Low complexity-rich tracts occupy residues 216 to 242 (QQQQ…PQQP) and 264 to 280 (SSNS…NSSS). A dksA C4-type zinc finger spans residues 317–337 (CRRCGSEIPLAERRFVLCPSC). 4 disordered regions span residues 366 to 409 (LSKE…KVCQ), 480 to 507 (MSHQ…PQPH), 522 to 550 (NSGV…HNGS), and 568 to 641 (LQLQ…YPNN). Residues 379-400 (QNNKSNEDQNNESRRGSQEKPA) are compositionally biased toward basic and acidic residues. Over residues 486–495 (QPPPPPPPPL) the composition is skewed to pro residues. The span at 522-533 (NSGVAGIQQPNN) shows a compositional bias: polar residues. A compositionally biased stretch (low complexity) spans 569 to 579 (QLQQQQQQQQQ). Pro residues predominate over residues 597-606 (SFPPPPPPPL). Residues 610-641 (QHQGLQQYSHAQQQQQQQHQQQQPYHQEYPNN) show a composition bias toward low complexity.

It localises to the nucleus. Transcription factor that modulates the white-opaque switch. This Candida albicans (strain SC5314 / ATCC MYA-2876) (Yeast) protein is White-opaque regulator 3 (WOR3).